The primary structure comprises 311 residues: Small ribosomal subunit protein uS3 (311 aa).

One can recognise a KH type-2 domain in the interval 17–86; sequence MDEYFAEQLN…NPQIDAQEVK (70 aa). The tract at residues 190–267 is disordered; that stretch reads PDSYTTTEPS…EPQAEVAEDL (78 aa). The segment covering 194–204 has biased composition (low complexity); it reads TTTEPSEPVTE. Basic and acidic residues predominate over residues 205 to 231; that stretch reads PVEKPAEKPAAKPAEKPVEAPKKESAA. The segment covering 232 to 247 has biased composition (low complexity); sequence KPKTPAVAPEKPVETA. Residues 248 to 267 show a composition bias toward acidic residues; that stretch reads EVAEPEEAEEEPQAEVAEDL.

This sequence belongs to the universal ribosomal protein uS3 family. Part of the 30S ribosomal subunit.

Binds the lower part of the 30S subunit head. The sequence is that of Small ribosomal subunit protein uS3 from Methanosarcina barkeri (strain Fusaro / DSM 804).